The primary structure comprises 366 residues: Ribosomal RNA large subunit methyltransferase M (366 aa).

S-adenosyl-L-methionine-binding positions include Ser-188, 221–224 (CPGG), Asp-240, Asp-260, and Asp-277. Lys-306 serves as the catalytic Proton acceptor.

The protein belongs to the class I-like SAM-binding methyltransferase superfamily. RNA methyltransferase RlmE family. RlmM subfamily. As to quaternary structure, monomer.

The protein resides in the cytoplasm. The enzyme catalyses cytidine(2498) in 23S rRNA + S-adenosyl-L-methionine = 2'-O-methylcytidine(2498) in 23S rRNA + S-adenosyl-L-homocysteine + H(+). Catalyzes the 2'-O-methylation at nucleotide C2498 in 23S rRNA. The chain is Ribosomal RNA large subunit methyltransferase M from Salmonella paratyphi C (strain RKS4594).